The following is a 187-amino-acid chain: MLYNKEQGTSGASSSGRRTKFHFDRFVQMVLFIAANPNYCCSVASIPKSGVTPDLKRADILEQKIKSLNSALSPKLKEESRLGGPLHNPSILPAPSFSSLPISSNGKKSLAGYRPKSRKKQTILPNGQPKECATCGDTWTSQWRSGPNGNVELCSRCGIAYRKKMEKKIRSQQSSDDGTKNFIFKNK.

2 disordered regions span residues Gly-106–Gly-127 and Lys-167–Lys-187. The GATA-type zinc-finger motif lies at Asn-126–Lys-180.

In terms of biological role, involved in morphogenesis. May be involved in cell wall organization and biogenesis. In Saccharomyces cerevisiae (strain ATCC 204508 / S288c) (Baker's yeast), this protein is Protein ECM23 (ECM23).